The following is a 727-amino-acid chain: Tubulin polyglutamylase TTLL11 (727 aa).

Residues 1-12 show a composition bias toward basic and acidic residues; the sequence is MRRSSPEKKPEA. The segment at 1-88 is disordered; sequence MRRSSPEKKP…ARVVRRLPPA (88 aa). Residues 17–34 are compositionally biased toward low complexity; sequence DAAAAAAATAAATESLPA. Composition is skewed to basic and acidic residues over residues 49–63 and 72–81; these read DPER…KDVG and HAPEEGEARV. One can recognise a TTL domain in the interval 125–477; sequence PVTVDSSKAR…EVKVAVIRDT (353 aa). ATP-binding positions include lysine 246, 252–253, 279–282, and 292–294; these read QG, QEYI, and KFD. Residue glutamine 252 coordinates a protein. Arginine 318 serves as a coordination point for L-glutamate. 340 to 341 lines the ATP pocket; sequence TN. L-glutamate is bound by residues tyrosine 342, serine 343, and lysine 362. Residues aspartate 425, glutamate 438, and asparagine 440 each coordinate Mg(2+). The interval 464-566 is c-MTBD region; it reads LVDEEVKVAV…SICLKQVFPK (103 aa). Lysine 470 contacts L-glutamate. Disordered regions lie at residues 530–551 and 694–727; these read KSFT…EPNP and RPLQ…LSQS.

This sequence belongs to the tubulin--tyrosine ligase family. It depends on Mg(2+) as a cofactor. As to expression, highly expressed in brain, kidney, liver, lung, muscle and testis. Expressed in heart, spleen and trachea. In the brain, expressed in ependymal cilia, cortex, corpus callosum and striatum.

It localises to the cytoplasm. Its subcellular location is the cytoskeleton. The protein resides in the cilium basal body. It catalyses the reaction L-glutamyl-[protein] + L-glutamate + ATP = gamma-L-glutamyl-L-glutamyl-[protein] + ADP + phosphate + H(+). It carries out the reaction (L-glutamyl)(n)-gamma-L-glutamyl-L-glutamyl-[protein] + L-glutamate + ATP = (L-glutamyl)(n+1)-gamma-L-glutamyl-L-glutamyl-[protein] + ADP + phosphate + H(+). Its function is as follows. Polyglutamylase which modifies tubulin, generating polyglutamate side chains of variable lengths on the gamma-carboxyl group of specific glutamate residues within the C-terminal tail of tubulin. Preferentially mediates ATP-dependent polyglutamate long side-chain elongation over the initiation step of the polyglutamylation reaction. Preferentially modifies the alpha-tubulin tail over a beta-tail. Required for CCSAP localization to both spindle and cilia microtubules. Promotes tubulin polyglutamylation which stimulates spastin/SPAST-mediated microtubule severing, thereby regulating microtubule functions. This Mus musculus (Mouse) protein is Tubulin polyglutamylase TTLL11.